The sequence spans 139 residues: Nucleoside diphosphate kinase (139 aa).

Positions 10, 58, 86, 92, 104, and 114 each coordinate ATP. His117 acts as the Pros-phosphohistidine intermediate in catalysis.

It belongs to the NDK family. In terms of assembly, homotetramer. Mg(2+) is required as a cofactor.

The protein resides in the cytoplasm. The enzyme catalyses a 2'-deoxyribonucleoside 5'-diphosphate + ATP = a 2'-deoxyribonucleoside 5'-triphosphate + ADP. It carries out the reaction a ribonucleoside 5'-diphosphate + ATP = a ribonucleoside 5'-triphosphate + ADP. Major role in the synthesis of nucleoside triphosphates other than ATP. The ATP gamma phosphate is transferred to the NDP beta phosphate via a ping-pong mechanism, using a phosphorylated active-site intermediate. The polypeptide is Nucleoside diphosphate kinase (Rhodococcus opacus (strain B4)).